We begin with the raw amino-acid sequence, 419 residues long: Tyrosine--tRNA ligase (419 aa).

Tyrosine 34 is an L-tyrosine binding site. The short motif at 39–48 (PTADSLHIGN) is the 'HIGH' region element. Positions 169 and 173 each coordinate L-tyrosine. The 'KMSKS' region signature appears at 230 to 234 (KFGKT). Lysine 233 serves as a coordination point for ATP. Residues 352 to 419 (VPLVELLVSA…KKKYYLIRYA (68 aa)) enclose the S4 RNA-binding domain.

The protein belongs to the class-I aminoacyl-tRNA synthetase family. TyrS type 1 subfamily. In terms of assembly, homodimer.

The protein resides in the cytoplasm. The enzyme catalyses tRNA(Tyr) + L-tyrosine + ATP = L-tyrosyl-tRNA(Tyr) + AMP + diphosphate + H(+). In terms of biological role, catalyzes the attachment of tyrosine to tRNA(Tyr) in a two-step reaction: tyrosine is first activated by ATP to form Tyr-AMP and then transferred to the acceptor end of tRNA(Tyr). The protein is Tyrosine--tRNA ligase of Geobacillus kaustophilus (strain HTA426).